Consider the following 679-residue polypeptide: Transketolase 10 (679 aa).

H40 is a binding site for substrate. Thiamine diphosphate is bound by residues H80 and 129 to 131; that span reads GPL. A Mg(2+)-binding site is contributed by D170. Positions 171 and 200 each coordinate thiamine diphosphate. 2 residues coordinate Mg(2+): N200 and I202. H277, R371, and S398 together coordinate substrate. H277 contacts thiamine diphosphate. Positions 425 and 452 each coordinate thiamine diphosphate. The active-site Proton donor is the E425. 3 residues coordinate substrate: H476, D484, and R535.

The protein belongs to the transketolase family. As to quaternary structure, homodimer. Mg(2+) serves as cofactor. It depends on Ca(2+) as a cofactor. The cofactor is Mn(2+). Co(2+) is required as a cofactor. Requires thiamine diphosphate as cofactor. As to expression, leaves.

The enzyme catalyses D-sedoheptulose 7-phosphate + D-glyceraldehyde 3-phosphate = aldehydo-D-ribose 5-phosphate + D-xylulose 5-phosphate. Its function is as follows. Could be involved in the conversion of sugars, which are a major phenomenon in the rehydration process. Functionally, catalyzes the transfer of a two-carbon ketol group from a ketose donor to an aldose acceptor, via a covalent intermediate with the cofactor thiamine pyrophosphate. The protein is Transketolase 10 (TKT10) of Craterostigma plantagineum (Blue gem).